Reading from the N-terminus, the 477-residue chain is Pentatricopeptide repeat-containing protein At1g55630 (477 aa).

PPR repeat units lie at residues 151–185, 186–220, 221–255, 256–290, 291–325, 326–360, 361–395, 396–430, and 431–465; these read TANC…GYPT, TACT…NYRP, YKHS…GFTP, DVLT…GFSP, DLYT…GVEP, GVIH…GCTP, DVVC…GQLP, NVFT…GCNP, and NFVV…GHYV.

Belongs to the PPR family. P subfamily.

The sequence is that of Pentatricopeptide repeat-containing protein At1g55630 from Arabidopsis thaliana (Mouse-ear cress).